Reading from the N-terminus, the 344-residue chain is Methionine import ATP-binding protein MetN (344 aa).

The ABC transporter domain occupies 2–241 (IKLEKISKIF…PQTQLAKEFI (240 aa)). 38 to 45 (GASGAGKS) is an ATP binding site.

Belongs to the ABC transporter superfamily. Methionine importer (TC 3.A.1.24) family. The complex is composed of two ATP-binding proteins (MetN), two transmembrane proteins (MetI) and a solute-binding protein (MetQ).

The protein resides in the cell inner membrane. It carries out the reaction L-methionine(out) + ATP + H2O = L-methionine(in) + ADP + phosphate + H(+). The enzyme catalyses D-methionine(out) + ATP + H2O = D-methionine(in) + ADP + phosphate + H(+). In terms of biological role, part of the ABC transporter complex MetNIQ involved in methionine import. Responsible for energy coupling to the transport system. The sequence is that of Methionine import ATP-binding protein MetN from Pasteurella multocida (strain Pm70).